We begin with the raw amino-acid sequence, 475 residues long: Trifunctional enzyme subunit beta, mitochondrial (475 aa).

The N-terminal 34 residues, 1–34 (MISLLTYTLKNLPNTSKWALRFCMRPLSSSSQLQ), are a transit peptide targeting the mitochondrion. Lys73 carries the N6-acetyllysine; alternate modification. The residue at position 73 (Lys73) is an N6-succinyllysine; alternate. Catalysis depends on Cys139, which acts as the Acyl-thioester intermediate. Residues 174–221 (IRHSRKMRKMMLDLNKAKTLAQRLSIISKFRLNFLSPELPAVSEFSTS) lie within the membrane without spanning it. Lys189 carries the post-translational modification N6-acetyllysine; alternate. Lys189 is modified (N6-succinyllysine; alternate). N6-succinyllysine is present on residues Lys191 and Lys292. Lys294 bears the N6-acetyllysine; alternate mark. Lys294 carries the N6-succinyllysine; alternate modification. Lys299 is subject to N6-acetyllysine. At Lys333 the chain carries N6-acetyllysine; alternate. Lys333 carries the N6-succinyllysine; alternate modification. 2 positions are modified to N6-acetyllysine: Lys349 and Lys362. Cys459 (proton donor/acceptor) is an active-site residue.

This sequence belongs to the thiolase-like superfamily. Thiolase family. In terms of assembly, heterotetramer of 2 alpha/HADHA and 2 beta/HADHB subunits; forms the mitochondrial trifunctional enzyme. Also purified as higher order heterooligomers including a 4 alpha/HADHA and 4 beta/HADHB heterooligomer which physiological significance remains unclear. The mitochondrial trifunctional enzyme interacts with MTLN. Interacts with RSAD2/viperin.

The protein resides in the mitochondrion. It localises to the mitochondrion inner membrane. It is found in the mitochondrion outer membrane. The protein localises to the endoplasmic reticulum. It carries out the reaction an acyl-CoA + acetyl-CoA = a 3-oxoacyl-CoA + CoA. The catalysed reaction is butanoyl-CoA + acetyl-CoA = 3-oxohexanoyl-CoA + CoA. The enzyme catalyses hexanoyl-CoA + acetyl-CoA = 3-oxooctanoyl-CoA + CoA. It catalyses the reaction octanoyl-CoA + acetyl-CoA = 3-oxodecanoyl-CoA + CoA. It carries out the reaction decanoyl-CoA + acetyl-CoA = 3-oxododecanoyl-CoA + CoA. The catalysed reaction is dodecanoyl-CoA + acetyl-CoA = 3-oxotetradecanoyl-CoA + CoA. The enzyme catalyses tetradecanoyl-CoA + acetyl-CoA = 3-oxohexadecanoyl-CoA + CoA. The protein operates within lipid metabolism; fatty acid beta-oxidation. Functionally, mitochondrial trifunctional enzyme catalyzes the last three of the four reactions of the mitochondrial beta-oxidation pathway. The mitochondrial beta-oxidation pathway is the major energy-producing process in tissues and is performed through four consecutive reactions breaking down fatty acids into acetyl-CoA. Among the enzymes involved in this pathway, the trifunctional enzyme exhibits specificity for long-chain fatty acids. Mitochondrial trifunctional enzyme is a heterotetrameric complex composed of two proteins, the trifunctional enzyme subunit alpha/HADHA carries the 2,3-enoyl-CoA hydratase and the 3-hydroxyacyl-CoA dehydrogenase activities, while the trifunctional enzyme subunit beta/HADHB described here bears the 3-ketoacyl-CoA thiolase activity. The protein is Trifunctional enzyme subunit beta, mitochondrial (HADHB) of Bos taurus (Bovine).